Consider the following 431-residue polypeptide: Hydroxylamine reductase (431 aa).

[4Fe-4S] cluster is bound by residues cysteine 5, cysteine 8, cysteine 17, and cysteine 23. Residues histidine 131, glutamate 155, cysteine 199, cysteine 286, cysteine 314, cysteine 339, glutamate 373, and lysine 375 each coordinate hybrid [4Fe-2O-2S] cluster. Position 286 is a cysteine persulfide (cysteine 286).

Belongs to the HCP family. The cofactor is [4Fe-4S] cluster. It depends on hybrid [4Fe-2O-2S] cluster as a cofactor.

It localises to the cytoplasm. The catalysed reaction is A + NH4(+) + H2O = hydroxylamine + AH2 + H(+). Functionally, catalyzes the reduction of hydroxylamine to form NH(3) and H(2)O. This chain is Hydroxylamine reductase, found in Thermotoga maritima (strain ATCC 43589 / DSM 3109 / JCM 10099 / NBRC 100826 / MSB8).